The following is a 293-amino-acid chain: MPWIQLRINTNSDDAETISDLLMEEGSVSITFEDGKDTPIFEPKLGETPLWRDTVVVALFDAETDLTPTIAMLKTLPFLGENFSHKVEQIEDKDWVREWMDNFHPIQFGTRLWICPSWREIPDPTAVNVILDPGLAFGTGTHPTTALCLEWLDSLDLSNEEVIDFGCGSGILAVAALKLGAKNVTGIDIDYQAIDASRANAERNDVADKLALYLPEDQPADLKADVLVANILAGPLRELAPLIAERVKTGGKLALSGLLKEQAQEISDFYSQWFDMDAAVHKEDWSRLTGKRK.

S-adenosyl-L-methionine contacts are provided by threonine 145, glycine 166, aspartate 188, and asparagine 230.

This sequence belongs to the methyltransferase superfamily. PrmA family.

It is found in the cytoplasm. It catalyses the reaction L-lysyl-[protein] + 3 S-adenosyl-L-methionine = N(6),N(6),N(6)-trimethyl-L-lysyl-[protein] + 3 S-adenosyl-L-homocysteine + 3 H(+). In terms of biological role, methylates ribosomal protein L11. This chain is Ribosomal protein L11 methyltransferase, found in Shewanella baltica (strain OS155 / ATCC BAA-1091).